The primary structure comprises 246 residues: MTKLFIADLHLSESRPDLIQAFIHFLETEARTADELYILGDLFEFWIGDDEQSPLQQQITHALRTLANHGCQLFYSHGNRDFMIGKRFAQECGMTLLPPVYPCELAGEKALLLHGDQLCTDDEAYQRFRRITSWPWLQWIFLHLPLSRRVKIAQQIRQGSHKGKQQKSRSIMDVTPQSVITCFEQHKATLMIHGHTHRPQIHDVTLSSNQPARRIVLGDWDTDLWYLKIDDRDINLISQPINTAKN.

The Mn(2+) site is built by Asp8, His10, Asp41, Asn79, and His114. 79-80 provides a ligand contact to substrate; the sequence is NR. 5 residues coordinate substrate: Asp122, Ser160, Lys164, Lys167, and His195. Residues His195 and His197 each coordinate Mn(2+).

The protein belongs to the LpxH family. Mn(2+) is required as a cofactor.

The protein resides in the cell inner membrane. The catalysed reaction is UDP-2-N,3-O-bis[(3R)-3-hydroxytetradecanoyl]-alpha-D-glucosamine + H2O = 2-N,3-O-bis[(3R)-3-hydroxytetradecanoyl]-alpha-D-glucosaminyl 1-phosphate + UMP + 2 H(+). The protein operates within glycolipid biosynthesis; lipid IV(A) biosynthesis; lipid IV(A) from (3R)-3-hydroxytetradecanoyl-[acyl-carrier-protein] and UDP-N-acetyl-alpha-D-glucosamine: step 4/6. Its function is as follows. Hydrolyzes the pyrophosphate bond of UDP-2,3-diacylglucosamine to yield 2,3-diacylglucosamine 1-phosphate (lipid X) and UMP by catalyzing the attack of water at the alpha-P atom. Involved in the biosynthesis of lipid A, a phosphorylated glycolipid that anchors the lipopolysaccharide to the outer membrane of the cell. The chain is UDP-2,3-diacylglucosamine hydrolase from Tolumonas auensis (strain DSM 9187 / NBRC 110442 / TA 4).